The chain runs to 285 residues: Ribosomal RNA small subunit methyltransferase H (285 aa).

Residues Ala34–His36, Asp51, Phe75, Asp96, and His103 contribute to the S-adenosyl-L-methionine site. Residues Pro258–Pro285 form a disordered region.

Belongs to the methyltransferase superfamily. RsmH family.

It is found in the cytoplasm. It carries out the reaction cytidine(1402) in 16S rRNA + S-adenosyl-L-methionine = N(4)-methylcytidine(1402) in 16S rRNA + S-adenosyl-L-homocysteine + H(+). Specifically methylates the N4 position of cytidine in position 1402 (C1402) of 16S rRNA. In Thermus thermophilus (strain ATCC BAA-163 / DSM 7039 / HB27), this protein is Ribosomal RNA small subunit methyltransferase H.